Reading from the N-terminus, the 439-residue chain is sn-glycerol-3-phosphate-binding periplasmic protein UgpB (439 aa).

The signal sequence occupies residues 1–25 (MFNNAIRKTSICVALTLAFSANAMA). The sn-glycerol 3-phosphate site is built by Tyr67, Glu91, Ser146, Ser272, Gly309, Tyr348, and Arg399.

This sequence belongs to the bacterial solute-binding protein 1 family. In terms of assembly, the complex is composed of two ATP-binding proteins (UgpC), two transmembrane proteins (UgpA and UgpE) and a solute-binding protein (UgpB).

The protein resides in the periplasm. Functionally, part of the ABC transporter complex UgpBAEC involved in sn-glycerol-3-phosphate (G3P) import. Binds G3P. The sequence is that of sn-glycerol-3-phosphate-binding periplasmic protein UgpB (ugpB) from Yersinia enterocolitica serotype O:8 / biotype 1B (strain NCTC 13174 / 8081).